The primary structure comprises 479 residues: Aspartyl/glutamyl-tRNA(Asn/Gln) amidotransferase subunit B (479 aa).

Belongs to the GatB/GatE family. GatB subfamily. As to quaternary structure, heterotrimer of A, B and C subunits.

The enzyme catalyses L-glutamyl-tRNA(Gln) + L-glutamine + ATP + H2O = L-glutaminyl-tRNA(Gln) + L-glutamate + ADP + phosphate + H(+). The catalysed reaction is L-aspartyl-tRNA(Asn) + L-glutamine + ATP + H2O = L-asparaginyl-tRNA(Asn) + L-glutamate + ADP + phosphate + 2 H(+). Allows the formation of correctly charged Asn-tRNA(Asn) or Gln-tRNA(Gln) through the transamidation of misacylated Asp-tRNA(Asn) or Glu-tRNA(Gln) in organisms which lack either or both of asparaginyl-tRNA or glutaminyl-tRNA synthetases. The reaction takes place in the presence of glutamine and ATP through an activated phospho-Asp-tRNA(Asn) or phospho-Glu-tRNA(Gln). The sequence is that of Aspartyl/glutamyl-tRNA(Asn/Gln) amidotransferase subunit B from Mycoplasma mycoides subsp. mycoides SC (strain CCUG 32753 / NCTC 10114 / PG1).